The following is a 238-amino-acid chain: Large ribosomal subunit protein bL25 (238 aa).

The span at 1–10 (MATTVKELKA) shows a compositional bias: basic and acidic residues. The disordered stretch occupies residues 1–24 (MATTVKELKATARPKSGKGAARAE).

The protein belongs to the bacterial ribosomal protein bL25 family. CTC subfamily. As to quaternary structure, part of the 50S ribosomal subunit; part of the 5S rRNA/L5/L18/L25 subcomplex. Contacts the 5S rRNA. Binds to the 5S rRNA independently of L5 and L18.

Its function is as follows. This is one of the proteins that binds to the 5S RNA in the ribosome where it forms part of the central protuberance. The sequence is that of Large ribosomal subunit protein bL25 from Bradyrhizobium diazoefficiens (strain JCM 10833 / BCRC 13528 / IAM 13628 / NBRC 14792 / USDA 110).